The primary structure comprises 1017 residues: Dopamine dehydroxylase (1017 aa).

The segment at residues M1–A34 is a signal peptide (tat-type signal). One can recognise a 4Fe-4S Mo/W bis-MGD-type domain in the interval D45–D103. [4Fe-4S] cluster contacts are provided by C53, C56, C61, and C89. K91 functions as the Electron donor/acceptor in the catalytic mechanism.

It belongs to the prokaryotic molybdopterin-containing oxidoreductase family. Requires [4Fe-4S] cluster as cofactor. It depends on Mo-bis(molybdopterin guanine dinucleotide) as a cofactor. Predicted to be exported by the Tat system. The position of the signal peptide cleavage has not been experimentally proven.

It catalyses the reaction dopamine + AH2 = 3-tyramine + A + H2O. In terms of biological role, involved in drug metabolism, as part of an interspecies gut bacterial pathway for Levodopa (L-dopa) metabolism, acting on dopamine produced by Enterecoccus L-dopa decarboxylase. Removes the para hydroxyl group of dopamine to produce m-tyramine (3-tyramine). It is possible that dopamine dehydroxylation influences the multiple side effects of L-dopa administration linked to dopamine production in the treatment of Parkinson's disease. This is Dopamine dehydroxylase from Eggerthella lenta (Eubacterium lentum).